The chain runs to 105 residues: Large ribosomal subunit protein bL21 (105 aa).

This sequence belongs to the bacterial ribosomal protein bL21 family. Part of the 50S ribosomal subunit. Contacts protein L20.

This protein binds to 23S rRNA in the presence of protein L20. The polypeptide is Large ribosomal subunit protein bL21 (Rhizobium etli (strain ATCC 51251 / DSM 11541 / JCM 21823 / NBRC 15573 / CFN 42)).